The chain runs to 317 residues: UAP56-interacting factor (317 aa).

An N-acetylmethionine modification is found at Met1. The segment at 1 to 26 is disordered; that stretch reads MNRFGTRLVGATATPPPPPKARSNEN. Phosphothreonine is present on Thr14. Residue Ser23 is modified to Phosphoserine. The UAP56-binding motif signature appears at 26 to 44; the sequence is NLDKIDMSLDDIIKLNRKE. Phosphoserine is present on residues Ser60 and Ser117. Lys139 is covalently cross-linked (Glycyl lysine isopeptide (Lys-Gly) (interchain with G-Cter in SUMO1)). Residue Lys260 forms a Glycyl lysine isopeptide (Lys-Gly) (interchain with G-Cter in SUMO2) linkage.

Belongs to the UIF family. In terms of assembly, interacts with DDX39B/UAP56 and NXF1; interaction with DDX39B/UAP56 and NXF1 are mutually exclusive. Interacts with SSRP1; required for its recruitment to mRNAs. Interacts with CHTOP.

It is found in the nucleus. The protein localises to the nucleoplasm. It localises to the nucleus speckle. Its function is as follows. Required for mRNA export from the nucleus to the cytoplasm. Acts as an adapter that uses the DDX39B/UAP56-NFX1 pathway to ensure efficient mRNA export and delivering to the nuclear pore. Associates with spliced and unspliced mRNAs simultaneously with ALYREF/THOC4. This is UAP56-interacting factor (Fyttd1) from Mus musculus (Mouse).